The chain runs to 157 residues: Small ribosomal subunit protein uS9 (157 aa).

It belongs to the universal ribosomal protein uS9 family.

The polypeptide is Small ribosomal subunit protein uS9 (Caulobacter vibrioides (strain ATCC 19089 / CIP 103742 / CB 15) (Caulobacter crescentus)).